A 269-amino-acid chain; its full sequence is Eukaryotic translation initiation factor 3 subunit G-1 (269 aa).

An RRM domain is found at 188–266; that stretch reads AAIRISNLSE…LILSVEWSKP (79 aa).

Belongs to the eIF-3 subunit G family. Component of the eukaryotic translation initiation factor 3 (eIF-3) complex. The eIF-3 complex interacts with pix.

It localises to the cytoplasm. Functionally, RNA-binding component of the eukaryotic translation initiation factor 3 (eIF-3) complex, which is involved in protein synthesis of a specialized repertoire of mRNAs and, together with other initiation factors, stimulates binding of mRNA and methionyl-tRNAi to the 40S ribosome. The eIF-3 complex specifically targets and initiates translation of a subset of mRNAs involved in cell proliferation. This subunit can bind 18S rRNA. The sequence is that of Eukaryotic translation initiation factor 3 subunit G-1 from Drosophila willistoni (Fruit fly).